Reading from the N-terminus, the 270-residue chain is Acyl-[acyl-carrier-protein]--UDP-N-acetylglucosamine O-acyltransferase (270 aa).

It belongs to the transferase hexapeptide repeat family. LpxA subfamily. Homotrimer.

It is found in the cytoplasm. The enzyme catalyses a (3R)-hydroxyacyl-[ACP] + UDP-N-acetyl-alpha-D-glucosamine = a UDP-3-O-[(3R)-3-hydroxyacyl]-N-acetyl-alpha-D-glucosamine + holo-[ACP]. The protein operates within glycolipid biosynthesis; lipid IV(A) biosynthesis; lipid IV(A) from (3R)-3-hydroxytetradecanoyl-[acyl-carrier-protein] and UDP-N-acetyl-alpha-D-glucosamine: step 1/6. Functionally, involved in the biosynthesis of lipid A, a phosphorylated glycolipid that anchors the lipopolysaccharide to the outer membrane of the cell. In Sinorhizobium fredii (strain NBRC 101917 / NGR234), this protein is Acyl-[acyl-carrier-protein]--UDP-N-acetylglucosamine O-acyltransferase.